A 610-amino-acid polypeptide reads, in one-letter code: DNA mismatch repair protein MutL (610 aa).

This sequence belongs to the DNA mismatch repair MutL/HexB family.

This protein is involved in the repair of mismatches in DNA. It is required for dam-dependent methyl-directed DNA mismatch repair. May act as a 'molecular matchmaker', a protein that promotes the formation of a stable complex between two or more DNA-binding proteins in an ATP-dependent manner without itself being part of a final effector complex. The sequence is that of DNA mismatch repair protein MutL from Rickettsia rickettsii (strain Sheila Smith).